The primary structure comprises 148 residues: NADPH-dependent 7-cyano-7-deazaguanine reductase (148 aa).

Cysteine 50 (thioimide intermediate) is an active-site residue. Residue aspartate 57 is the Proton donor of the active site. Substrate-binding positions include 72–74 (VES) and 91–92 (HE).

It belongs to the GTP cyclohydrolase I family. QueF type 1 subfamily.

Its subcellular location is the cytoplasm. The enzyme catalyses 7-aminomethyl-7-carbaguanine + 2 NADP(+) = 7-cyano-7-deazaguanine + 2 NADPH + 3 H(+). Its pathway is tRNA modification; tRNA-queuosine biosynthesis. Functionally, catalyzes the NADPH-dependent reduction of 7-cyano-7-deazaguanine (preQ0) to 7-aminomethyl-7-deazaguanine (preQ1). The protein is NADPH-dependent 7-cyano-7-deazaguanine reductase of Helicobacter pylori (strain G27).